A 279-amino-acid polypeptide reads, in one-letter code: Alcohol dehydrogenase-related 31 kDa protein (279 aa).

11 to 34 is an NAD(+) binding site; sequence YVADCGGIALETSKVLMTKNIAKL. Ser-139 is a binding site for substrate. Tyr-152 serves as the catalytic Proton acceptor.

The protein belongs to the short-chain dehydrogenases/reductases (SDR) family.

This Drosophila guanche (Fruit fly) protein is Alcohol dehydrogenase-related 31 kDa protein (Adhr).